Reading from the N-terminus, the 144-residue chain is FK506-binding protein 2 (144 aa).

Positions 1-20 (MARIIVLIVAFMALIAGVFA) are cleaved as a signal peptide. One can recognise a PPIase FKBP-type domain in the interval 48–136 (GDTVSVHYTG…IFTTELVSID (89 aa)). Positions 141 to 144 (RDEL) match the Prevents secretion from ER motif.

Belongs to the FKBP-type PPIase family. FKBP2 subfamily.

The protein localises to the endoplasmic reticulum. The enzyme catalyses [protein]-peptidylproline (omega=180) = [protein]-peptidylproline (omega=0). With respect to regulation, inhibited by both FK506 and rapamycin. Functionally, PPIases accelerate the folding of proteins. It catalyzes the cis-trans isomerization of proline imidic peptide bonds in oligopeptides. In Yarrowia lipolytica (strain CLIB 122 / E 150) (Yeast), this protein is FK506-binding protein 2 (FPR2).